The chain runs to 47 residues: VACRCESDGPDVRSATFTGTVDLWNCNTGWHKCIATYTAVASCCKKD.

Disulfide bonds link Cys-3–Cys-43, Cys-5–Cys-33, and Cys-26–Cys-44.

This sequence belongs to the sea anemone sodium channel inhibitory toxin family. Type II subfamily.

The protein resides in the secreted. Its subcellular location is the nematocyst. Is potently lethal to crabs, although it showed neither lethal activity in mice nor hemolytic activity. May bind to voltage-gated sodium channels (Nav), thereby delaying their inactivation during signal transduction. This chain is Delta-halcutoxin-Hcg1a, found in Isohalcurias carlgreni (Sea anemone).